Consider the following 159-residue polypeptide: Ribosomal RNA large subunit methyltransferase H (159 aa).

Residues Leu76, Gly108, and 127 to 132 (FSKMTF) contribute to the S-adenosyl-L-methionine site.

This sequence belongs to the RNA methyltransferase RlmH family. As to quaternary structure, homodimer.

The protein resides in the cytoplasm. It carries out the reaction pseudouridine(1915) in 23S rRNA + S-adenosyl-L-methionine = N(3)-methylpseudouridine(1915) in 23S rRNA + S-adenosyl-L-homocysteine + H(+). Functionally, specifically methylates the pseudouridine at position 1915 (m3Psi1915) in 23S rRNA. The sequence is that of Ribosomal RNA large subunit methyltransferase H from Staphylococcus aureus (strain Mu3 / ATCC 700698).